The primary structure comprises 410 residues: Zinc finger protein 322 (410 aa).

8 C2H2-type zinc fingers span residues 81–103, 109–131, 137–159, 165–187, 193–215, 221–243, 249–271, and 277–299; these read YRCD…QRIH, YKCS…QRTH, YTCD…QRSH, YLCN…RRTH, FKCL…QRTH, YKCN…KRVH, YKCG…QRVH, and YKCL…QATH. The C2H2-type 9; degenerate zinc-finger motif lies at 303–325; the sequence is FKCLEYEKSFNCSSDFIVHQRIH. Residues 361–383 form a C2H2-type 10; degenerate zinc finger; sequence YKYSVCDKTFHHSSALLQHQTVH. At S400 the chain carries Phosphoserine.

This sequence belongs to the krueppel C2H2-type zinc-finger protein family. Interacts with POU5F1.

The protein resides in the nucleus. It is found in the cytoplasm. Functionally, transcriptional activator. Important for maintenance of pluripotency in embryonic stem cells. Binds directly to the POU5F1 distal enhancer and the NANOG proximal promoter, and enhances expression of both genes. Can also bind to numerous other gene promoters and regulates expression of many other pluripotency factors, either directly or indirectly. Promotes inhibition of MAPK signaling during embryonic stem cell differentiation. This Mus musculus (Mouse) protein is Zinc finger protein 322 (Znf322).